The primary structure comprises 211 residues: Uracil phosphoribosyltransferase (211 aa).

Residues arginine 77, arginine 102, and 129-137 contribute to the 5-phospho-alpha-D-ribose 1-diphosphate site; that span reads DPMLATGGS. Uracil contacts are provided by residues isoleucine 192 and 197–199; that span reads GDA. Aspartate 198 is a 5-phospho-alpha-D-ribose 1-diphosphate binding site.

This sequence belongs to the UPRTase family. Mg(2+) serves as cofactor.

The enzyme catalyses UMP + diphosphate = 5-phospho-alpha-D-ribose 1-diphosphate + uracil. Its pathway is pyrimidine metabolism; UMP biosynthesis via salvage pathway; UMP from uracil: step 1/1. Allosterically activated by GTP. Catalyzes the conversion of uracil and 5-phospho-alpha-D-ribose 1-diphosphate (PRPP) to UMP and diphosphate. This Corynebacterium diphtheriae (strain ATCC 700971 / NCTC 13129 / Biotype gravis) protein is Uracil phosphoribosyltransferase.